A 453-amino-acid polypeptide reads, in one-letter code: Glutamate-rich protein 5 (453 aa).

3 disordered regions span residues 1-38, 66-377, and 394-453; these read MGCSSSALNKAGDDNRLRSATEESESCFVQPKPRALGR, NGVQ…EHPA, and TNEE…HSML. Residues 11–21 show a composition bias toward basic and acidic residues; sequence AGDDNRLRSAT. Ser-155 carries the post-translational modification Phosphoserine. Polar residues-rich tracts occupy residues 230-243 and 271-283; these read LQETVGENEQSQPL and QETLGENEQSQLR. Composition is skewed to basic and acidic residues over residues 305 to 332, 364 to 374, and 394 to 403; these read EEEKRLQEMLGKDEQPQLRETIPREHGG, IQPERTVESME, and TNEEDQHIEG. Over residues 404–413 the composition is skewed to acidic residues; sequence ETGETVETEM. Basic and acidic residues predominate over residues 414-424; the sequence is ESEKVSEGAET.

The protein is Glutamate-rich protein 5 (ERICH5) of Bos taurus (Bovine).